A 103-amino-acid chain; its full sequence is Large ribosomal subunit protein uL24 (103 aa).

This sequence belongs to the universal ribosomal protein uL24 family. In terms of assembly, part of the 50S ribosomal subunit.

In terms of biological role, one of two assembly initiator proteins, it binds directly to the 5'-end of the 23S rRNA, where it nucleates assembly of the 50S subunit. One of the proteins that surrounds the polypeptide exit tunnel on the outside of the subunit. The polypeptide is Large ribosomal subunit protein uL24 (Bacillus cytotoxicus (strain DSM 22905 / CIP 110041 / 391-98 / NVH 391-98)).